A 205-amino-acid chain; its full sequence is Imidazole glycerol phosphate synthase subunit HisH (205 aa).

Residues 1–205 (MIALVDYGGG…FFKMALGDKK (205 aa)) form the Glutamine amidotransferase type-1 domain. Residue Cys79 is the Nucleophile of the active site. Catalysis depends on residues His181 and Glu183.

Heterodimer of HisH and HisF.

Its subcellular location is the cytoplasm. It catalyses the reaction 5-[(5-phospho-1-deoxy-D-ribulos-1-ylimino)methylamino]-1-(5-phospho-beta-D-ribosyl)imidazole-4-carboxamide + L-glutamine = D-erythro-1-(imidazol-4-yl)glycerol 3-phosphate + 5-amino-1-(5-phospho-beta-D-ribosyl)imidazole-4-carboxamide + L-glutamate + H(+). It carries out the reaction L-glutamine + H2O = L-glutamate + NH4(+). The protein operates within amino-acid biosynthesis; L-histidine biosynthesis; L-histidine from 5-phospho-alpha-D-ribose 1-diphosphate: step 5/9. Functionally, IGPS catalyzes the conversion of PRFAR and glutamine to IGP, AICAR and glutamate. The HisH subunit catalyzes the hydrolysis of glutamine to glutamate and ammonia as part of the synthesis of IGP and AICAR. The resulting ammonia molecule is channeled to the active site of HisF. In Dehalococcoides mccartyi (strain CBDB1), this protein is Imidazole glycerol phosphate synthase subunit HisH.